Reading from the N-terminus, the 294-residue chain is Tryptophan 2,3-dioxygenase (294 aa).

The disordered stretch occupies residues 1–20 (MSEFKGCPFSGAASEAGTKA). Residues 63 to 67 (FIVQH), Tyr-125, and Arg-129 contribute to the substrate site. His-252 contacts heme. Thr-266 is a substrate binding site.

The protein belongs to the tryptophan 2,3-dioxygenase family. In terms of assembly, homotetramer. Requires heme as cofactor.

The enzyme catalyses L-tryptophan + O2 = N-formyl-L-kynurenine. It functions in the pathway amino-acid degradation; L-tryptophan degradation via kynurenine pathway; L-kynurenine from L-tryptophan: step 1/2. Heme-dependent dioxygenase that catalyzes the oxidative cleavage of the L-tryptophan (L-Trp) pyrrole ring and converts L-tryptophan to N-formyl-L-kynurenine. Catalyzes the oxidative cleavage of the indole moiety. The protein is Tryptophan 2,3-dioxygenase of Cupriavidus necator (strain ATCC 17699 / DSM 428 / KCTC 22496 / NCIMB 10442 / H16 / Stanier 337) (Ralstonia eutropha).